We begin with the raw amino-acid sequence, 344 residues long: Endoplasmic reticulum junction formation protein lunapark-1 (344 aa).

At Met-1–Thr-39 the chain is on the cytoplasmic side. Residues Leu-40–Leu-60 traverse the membrane as a helical segment. Topologically, residues Arg-61–Thr-68 are lumenal. A helical transmembrane segment spans residues Tyr-69–Ile-89. At Asn-90 to Ser-344 the chain is on the cytoplasmic side. Residues Asp-116–Ala-140 are a coiled coil. 2 disordered regions span residues Glu-136–Lys-155 and Gln-171–Asp-192. Over residues Ala-140–Lys-155 the composition is skewed to polar residues. A C4-type; plays a role in ER morphology zinc finger spans residues Cys-239–Cys-264. The disordered stretch occupies residues Pro-275–Ser-344. Residues Pro-312 to Gly-326 show a composition bias toward polar residues. Over residues Ser-327–Ser-344 the composition is skewed to basic and acidic residues.

This sequence belongs to the lunapark family.

Its subcellular location is the endoplasmic reticulum membrane. Plays a role in tubular endoplasmic reticulum network formation and maintenance. May be involved in central nervous system development. Has a presynaptic role in neurotransmission. Likely to operate in synaptogenesis by regulating vesicular transport or localization. Required for correct localization of rab-3 and snb-1. This chain is Endoplasmic reticulum junction formation protein lunapark-1, found in Caenorhabditis briggsae.